Consider the following 104-residue polypeptide: A-type ATP synthase subunit F (104 aa).

It belongs to the V-ATPase F subunit family. As to quaternary structure, has multiple subunits with at least A(3), B(3), C, D, E, F, H, I and proteolipid K(x).

The protein resides in the cell membrane. Component of the A-type ATP synthase that produces ATP from ADP in the presence of a proton gradient across the membrane. The protein is A-type ATP synthase subunit F of Thermoplasma volcanium (strain ATCC 51530 / DSM 4299 / JCM 9571 / NBRC 15438 / GSS1).